The following is a 334-amino-acid chain: Aspartate carbamoyltransferase catalytic subunit (334 aa).

Arg71 and Thr72 together coordinate carbamoyl phosphate. Lys99 contributes to the L-aspartate binding site. Carbamoyl phosphate-binding residues include Arg121, His151, and Gln154. The L-aspartate site is built by Arg184 and Arg239. Gly280 and Pro281 together coordinate carbamoyl phosphate.

It belongs to the aspartate/ornithine carbamoyltransferase superfamily. ATCase family. In terms of assembly, heterododecamer (2C3:3R2) of six catalytic PyrB chains organized as two trimers (C3), and six regulatory PyrI chains organized as three dimers (R2).

The enzyme catalyses carbamoyl phosphate + L-aspartate = N-carbamoyl-L-aspartate + phosphate + H(+). It participates in pyrimidine metabolism; UMP biosynthesis via de novo pathway; (S)-dihydroorotate from bicarbonate: step 2/3. Catalyzes the condensation of carbamoyl phosphate and aspartate to form carbamoyl aspartate and inorganic phosphate, the committed step in the de novo pyrimidine nucleotide biosynthesis pathway. The protein is Aspartate carbamoyltransferase catalytic subunit of Pseudomonas fluorescens (strain ATCC BAA-477 / NRRL B-23932 / Pf-5).